Consider the following 147-residue polypeptide: 3-dehydroquinate dehydratase (147 aa).

The active-site Proton acceptor is the tyrosine 23. Positions 75, 81, and 88 each coordinate substrate. Histidine 101 (proton donor) is an active-site residue. Residues leucine 102–serine 103 and arginine 112 contribute to the substrate site.

Belongs to the type-II 3-dehydroquinase family. Homododecamer.

The enzyme catalyses 3-dehydroquinate = 3-dehydroshikimate + H2O. It functions in the pathway metabolic intermediate biosynthesis; chorismate biosynthesis; chorismate from D-erythrose 4-phosphate and phosphoenolpyruvate: step 3/7. In terms of biological role, catalyzes a trans-dehydration via an enolate intermediate. This chain is 3-dehydroquinate dehydratase, found in Stutzerimonas stutzeri (strain A1501) (Pseudomonas stutzeri).